The sequence spans 429 residues: Histidine--tRNA ligase (429 aa).

This sequence belongs to the class-II aminoacyl-tRNA synthetase family. In terms of assembly, homodimer.

It localises to the cytoplasm. It catalyses the reaction tRNA(His) + L-histidine + ATP = L-histidyl-tRNA(His) + AMP + diphosphate + H(+). The polypeptide is Histidine--tRNA ligase (Pseudomonas aeruginosa (strain LESB58)).